The chain runs to 377 residues: MTDITQILTDLIGFPSITPEDAGCQKYMIQFLEQLGFTCQQLNNGPVSNFFACYGKIGPLLVFAGHTDVVPVGEVSKWDTDPFSLEEKNGMLYGRGVADMKGSLACMLHMARRFIKTYPSFPGRLGFLITSGEEGDEFNLGTPYAMQKLEQQGIVIDYCIVGEPSSSLKTGDVIKIGRRGSLSAKIHLSGKQGHVAYPHLADNPIHRISPVLAELTSMQWDNGNAYFPPTSMQITYIHCGGHAGNIIPGELNLHLNFRYSTEQTDESLKTRVINAFTHHKLNPTIEWRLNGEPFLTNKGILLESCKQTVLEHIGTLPELSTSGGTSDGRFIAPYGVEVIELGLVNATIHQVNECTSLQDLNTLETMYFSICEKLLID.

His-66 contributes to the Zn(2+) binding site. The active site involves Asp-68. A Zn(2+)-binding site is contributed by Asp-99. Glu-133 (proton acceptor) is an active-site residue. Residues Glu-134, Glu-163, and His-349 each coordinate Zn(2+).

It belongs to the peptidase M20A family. DapE subfamily. In terms of assembly, homodimer. The cofactor is Zn(2+). It depends on Co(2+) as a cofactor.

It catalyses the reaction N-succinyl-(2S,6S)-2,6-diaminopimelate + H2O = (2S,6S)-2,6-diaminopimelate + succinate. It participates in amino-acid biosynthesis; L-lysine biosynthesis via DAP pathway; LL-2,6-diaminopimelate from (S)-tetrahydrodipicolinate (succinylase route): step 3/3. Its function is as follows. Catalyzes the hydrolysis of N-succinyl-L,L-diaminopimelic acid (SDAP), forming succinate and LL-2,6-diaminopimelate (DAP), an intermediate involved in the bacterial biosynthesis of lysine and meso-diaminopimelic acid, an essential component of bacterial cell walls. The sequence is that of Succinyl-diaminopimelate desuccinylase from Legionella pneumophila (strain Lens).